The sequence spans 302 residues: Glycine--tRNA ligase alpha subunit (302 aa).

It belongs to the class-II aminoacyl-tRNA synthetase family. As to quaternary structure, tetramer of two alpha and two beta subunits.

The protein resides in the cytoplasm. The enzyme catalyses tRNA(Gly) + glycine + ATP = glycyl-tRNA(Gly) + AMP + diphosphate. This Psychromonas ingrahamii (strain DSM 17664 / CCUG 51855 / 37) protein is Glycine--tRNA ligase alpha subunit.